The sequence spans 373 residues: Mannan endo-1,4-beta-mannosidase A (373 aa).

An N-terminal signal peptide occupies residues 1-17; sequence MKGLFAFGLGLLSLVNA. Substrate contacts are provided by residues W81, N193, and 194–196; that span reads EPR. E194 functions as the Proton donor/acceptor in the catalytic mechanism. C197 and C200 are disulfide-bonded. The substrate site is built by E230, Y267, and W271. An intrachain disulfide couples C289 to C296. The active-site Nucleophile is E300. C308 and C359 are joined by a disulfide. W332 contributes to the substrate binding site.

The protein belongs to the glycosyl hydrolase 5 (cellulase A) family. In terms of assembly, monomer. Not glycosylated.

It is found in the secreted. The catalysed reaction is Random hydrolysis of (1-&gt;4)-beta-D-mannosidic linkages in mannans, galactomannans and glucomannans.. Endo-1,4-mannanase that catalyzes the random hydrolysis of (1-&gt;4)-beta-D-mannosidic linkages in mannans and heteromannans. It is a crucial enzyme for depolymerization of seed galactomannans and wood galactoglucomannans. Hydrolyzes structurally different mannan polysaccharides, such as galactomannans, glucomannans, and beta-1,4-mannans from different sources, yielding principally mannobiose. Also has transglycosylation activity. The chain is Mannan endo-1,4-beta-mannosidase A from Podospora anserina (strain S / ATCC MYA-4624 / DSM 980 / FGSC 10383) (Pleurage anserina).